Here is a 1057-residue protein sequence, read N- to C-terminus: Desmoglein-1-alpha (1057 aa).

The N-terminal stretch at Met1–Ser23 is a signal peptide. Residues Glu24 to Arg49 constitute a propeptide that is removed on maturation. Cadherin domains follow at residues Glu50–Phe157, Ser158–Leu269, Glu270–Ser389, and Arg386–Glu493. Topologically, residues Glu50–Pro564 are extracellular. Residues Asn110 and Asn180 are each glycosylated (N-linked (GlcNAc...) asparagine). A disordered region spans residues Thr490–Glu552. The segment covering Asn510–Thr525 has biased composition (polar residues). Residues Ala565–Ile585 form a helical membrane-spanning segment. Over Cys586–Lys1057 the chain is Cytoplasmic. 5 Desmoglein repeat repeats span residues Ala832 to Glu858, Ser859 to Val888, Gly889 to Ile918, Ala919 to Ile946, and Gln947 to Val975.

As to quaternary structure, binds to JUP/plakoglobin. Interacts with PKP2. Interacts with DSC3; there is evidence to suggest that the interaction promotes cell-cell adhesion of keratinocytes. As to expression, expressed in testis.

It localises to the cell membrane. The protein resides in the cell junction. The protein localises to the desmosome. It is found in the cytoplasm. Its subcellular location is the nucleus. Functionally, component of intercellular desmosome junctions. Involved in the interaction of plaque proteins and intermediate filaments mediating cell-cell adhesion. The polypeptide is Desmoglein-1-alpha (Dsg1a) (Mus musculus (Mouse)).